Consider the following 357-residue polypeptide: N-acetyl-gamma-glutamyl-phosphate reductase (357 aa).

The active site involves cysteine 160.

This sequence belongs to the NAGSA dehydrogenase family. Type 1 subfamily.

It localises to the cytoplasm. It carries out the reaction N-acetyl-L-glutamate 5-semialdehyde + phosphate + NADP(+) = N-acetyl-L-glutamyl 5-phosphate + NADPH + H(+). It functions in the pathway amino-acid biosynthesis; L-arginine biosynthesis; N(2)-acetyl-L-ornithine from L-glutamate: step 3/4. In terms of biological role, catalyzes the NADPH-dependent reduction of N-acetyl-5-glutamyl phosphate to yield N-acetyl-L-glutamate 5-semialdehyde. The chain is N-acetyl-gamma-glutamyl-phosphate reductase from Parasynechococcus marenigrum (strain WH8102).